A 103-amino-acid polypeptide reads, in one-letter code: Large ribosomal subunit protein bL21 (103 aa).

The protein belongs to the bacterial ribosomal protein bL21 family. In terms of assembly, part of the 50S ribosomal subunit. Contacts protein L20.

In terms of biological role, this protein binds to 23S rRNA in the presence of protein L20. The protein is Large ribosomal subunit protein bL21 of Desulfotalea psychrophila (strain LSv54 / DSM 12343).